The following is a 470-amino-acid chain: Solvent efflux pump outer membrane protein SrpC (470 aa).

The first 16 residues, 1–16, serve as a signal peptide directing secretion; it reads MKFKSLPMFALLMLGG. Cys-17 carries N-palmitoyl cysteine lipidation. Cys-17 is lipidated: S-diacylglycerol cysteine. Residues 104–123 form a disordered region; that stretch reads LDGQASGNRTRLPDDLSPTG.

The protein belongs to the outer membrane factor (OMF) (TC 1.B.17) family.

Its subcellular location is the cell outer membrane. In terms of biological role, the outer membrane component of an organic solvent efflux pump. Involved in export of a number of low log POW compounds including hexane (log POW 3.5), toluene (log POW 2.5) and dimethylphthalate (log POW 2.3). The solvent resistance phenotype has been postulated to depend on the operon expression level. This Pseudomonas putida (Arthrobacter siderocapsulatus) protein is Solvent efflux pump outer membrane protein SrpC (srpC).